Reading from the N-terminus, the 336-residue chain is Anthranilate phosphoribosyltransferase (336 aa).

5-phospho-alpha-D-ribose 1-diphosphate is bound by residues G82, 85–86 (GD), T90, 92–95 (NIST), 110–118 (KHGNRFASG), and S122. G82 lines the anthranilate pocket. Position 94 (S94) interacts with Mg(2+). Position 113 (N113) interacts with anthranilate. An anthranilate-binding site is contributed by R168. Residues D227 and E228 each coordinate Mg(2+).

The protein belongs to the anthranilate phosphoribosyltransferase family. As to quaternary structure, homodimer. Requires Mg(2+) as cofactor.

The catalysed reaction is N-(5-phospho-beta-D-ribosyl)anthranilate + diphosphate = 5-phospho-alpha-D-ribose 1-diphosphate + anthranilate. It functions in the pathway amino-acid biosynthesis; L-tryptophan biosynthesis; L-tryptophan from chorismate: step 2/5. Catalyzes the transfer of the phosphoribosyl group of 5-phosphorylribose-1-pyrophosphate (PRPP) to anthranilate to yield N-(5'-phosphoribosyl)-anthranilate (PRA). This Desulfitobacterium hafniense (strain DSM 10664 / DCB-2) protein is Anthranilate phosphoribosyltransferase.